Consider the following 486-residue polypeptide: Glutamyl-tRNA(Gln) amidotransferase subunit A (486 aa).

Active-site charge relay system residues include Lys-74 and Ser-149. Catalysis depends on Ser-173, which acts as the Acyl-ester intermediate.

Belongs to the amidase family. GatA subfamily. In terms of assembly, heterotrimer of A, B and C subunits.

It carries out the reaction L-glutamyl-tRNA(Gln) + L-glutamine + ATP + H2O = L-glutaminyl-tRNA(Gln) + L-glutamate + ADP + phosphate + H(+). In terms of biological role, allows the formation of correctly charged Gln-tRNA(Gln) through the transamidation of misacylated Glu-tRNA(Gln) in organisms which lack glutaminyl-tRNA synthetase. The reaction takes place in the presence of glutamine and ATP through an activated gamma-phospho-Glu-tRNA(Gln). In Prochlorococcus marinus (strain MIT 9313), this protein is Glutamyl-tRNA(Gln) amidotransferase subunit A.